Reading from the N-terminus, the 547-residue chain is ATP synthase subunit alpha (547 aa).

172–179 (GDRKTGKT) is a binding site for ATP.

It belongs to the ATPase alpha/beta chains family. As to quaternary structure, F-type ATPases have 2 components, CF(1) - the catalytic core - and CF(0) - the membrane proton channel. CF(1) has five subunits: alpha(3), beta(3), gamma(1), delta(1), epsilon(1). CF(0) has three main subunits: a(1), b(2) and c(9-12). The alpha and beta chains form an alternating ring which encloses part of the gamma chain. CF(1) is attached to CF(0) by a central stalk formed by the gamma and epsilon chains, while a peripheral stalk is formed by the delta and b chains.

It is found in the cell membrane. It catalyses the reaction ATP + H2O + 4 H(+)(in) = ADP + phosphate + 5 H(+)(out). In terms of biological role, produces ATP from ADP in the presence of a proton gradient across the membrane. The alpha chain is a regulatory subunit. In Rhodococcus erythropolis (strain PR4 / NBRC 100887), this protein is ATP synthase subunit alpha.